Consider the following 158-residue polypeptide: Transcription elongation factor GreA (158 aa).

This sequence belongs to the GreA/GreB family.

Functionally, necessary for efficient RNA polymerase transcription elongation past template-encoded arresting sites. The arresting sites in DNA have the property of trapping a certain fraction of elongating RNA polymerases that pass through, resulting in locked ternary complexes. Cleavage of the nascent transcript by cleavage factors such as GreA or GreB allows the resumption of elongation from the new 3'terminus. GreA releases sequences of 2 to 3 nucleotides. The polypeptide is Transcription elongation factor GreA (Pelobacter propionicus (strain DSM 2379 / NBRC 103807 / OttBd1)).